We begin with the raw amino-acid sequence, 374 residues long: MRIKEKPEDFVVIEKTNFSIAEPSKYYDQFKFMGIKDNGIPGDYTIYVLKKKNLSTTQAIKIIAKQFRLSKYRISFSGEKDKKAITYQLISIYKGPKKSMFLDNLELYYIGLSDKPVKLGSHLGNYFEIKVYAESPKGFDVFPNYFDVQRFGDKRLVNHLIGKHLIKNECEEAAKILLTFVGKESKKTIKVRQLIKEYWNNIEKLKKVIPLMPKALDIEKAYLQSFIEKKDYCKAFKAIPKWILMLFIHSYQSYIFNETLKMYLKNKTKIIKIRDLLEFYFADYYENIEIPLIGYKVNAKGEIKEIIDYLLDKEGITIEMLKNKKVVGTYRKGFQKMYDLKIKKNQKWLTKFYLEKGSYATVAIRSLFLEPIDF.

The Nucleophile role is filled by Asp-81. In terms of domain architecture, TRUD spans 141-340 (VFPNYFDVQR…RKGFQKMYDL (200 aa)).

The protein belongs to the pseudouridine synthase TruD family.

The enzyme catalyses uridine(13) in tRNA = pseudouridine(13) in tRNA. In terms of biological role, could be responsible for synthesis of pseudouridine from uracil-13 in transfer RNAs. The sequence is that of Probable tRNA pseudouridine synthase D from Nanoarchaeum equitans (strain Kin4-M).